The following is a 294-amino-acid chain: MHPRFQTAFGELPATLQSALQSYIDAPDFPAMLKAEQVDAITQRCGLDDDALAFALLPLAAACSLAPISQFYVGAIARGQSGNLYFGANMEFSGAPMQQTIHAEQCAVTHAWLRGEPALASITVNYTPCGHCRQFMNELNSGVSLKIRLPGREPATLGDYLPDSFGPKDLDITTLLMDQVDHGFQLALTDELEKAALAAANQSHAPYSNAHSGVALEAEDGTVYTGRYAENAAFNPSLPPLQAALILMNVSGDDCQKVKRAVLAEPESAILTQWDATRATLAALGCQNVSRITF.

CMP/dCMP-type deaminase domains are found at residues 48-168 (DDDA…FGPK) and 187-294 (ALTD…RITF). 89–91 (NME) is a substrate binding site. H102 provides a ligand contact to Zn(2+). Catalysis depends on E104, which acts as the Proton donor. Positions 129 and 132 each coordinate Zn(2+).

The protein belongs to the cytidine and deoxycytidylate deaminase family. Homodimer. The cofactor is Zn(2+).

The catalysed reaction is cytidine + H2O + H(+) = uridine + NH4(+). It catalyses the reaction 2'-deoxycytidine + H2O + H(+) = 2'-deoxyuridine + NH4(+). Functionally, this enzyme scavenges exogenous and endogenous cytidine and 2'-deoxycytidine for UMP synthesis. The sequence is that of Cytidine deaminase from Serratia proteamaculans (strain 568).